Reading from the N-terminus, the 1255-residue chain is MPTEMINESVKDITYDAIKIGLASPEKIREWSRGEVRKPETINYRTLKPEKDGLFCEKIFGPNKDWECHCGKYKKIRYKGVVCDRCGVEVTKASVRRERMGHIELAAPVSHIWYFKGIPSRMGLILDLSPRTLEKVLYFASYIVLDKGTTDLQYKQVLNEKEFREAYDKYGDRFRVGMGAEAIMELLEAIDLEKESKDLKRGLKESTGQKRARIIKRLEVVEAFRESGNKPEWMIMTVVPVIPPDLRPMVQLDGGRFATSDMNDLYRRIINRNNRLKRLLELGAPDIIVRNEKRMLQEAVDALIDNGRRGRPVTGPGNRPLKSLSDMLKGKQGRFRQNLLGKRVDYSGRSVIVVGPELKIYQCGLPKEMAIELFKPFVMKELVAKGTAHNIKSAKKMVERLQPEVWDILEEVIREHPVMLNRAPTLHRLGIQAFEPVLVEGKAIKLHPLVCTAFNADFDGDQMAVHLPLSVEAQAECRFLLLSPNNLLKPSDGGPVAVPSQDMVLGIYYLTLQKPGDIGEGKYFKSVNEAILAYENGVISLHAMIKVRRTGLNAEGVEESRTIESTVGRFIFNEIISQDLGFVDRSKPENFLALEIDFHTGKKQLKKILEKCINTRGATQTAETLDAIKSLGYKYSTRAAMTVSISDMTVPEAKKDIIERAEKQVEDIAKNHRRGLMTEEERYKAVIETWKEADDEITKELLSGLDKYNNIFMMADSGARGSDKQIKQLAGMRGLMADTSGKTIELPIKANFREGLDVLEYFISAHGARKGLSDTALRTADSGYLTRRLVDVSQDLIIREVDCGEGTDEIPGMEIKAFMDGKEVIEGLEDRIIGRYACETIYDDNGELIVKKNHIITPKRAARIVASKAFEDPNATIKIRTVLSCKSHIGVCAKCYGANMATGEAVQVGEAVGIIAAQSIGEPGTQLTMRTFHTGGVAGDDITQGLPRVEELFEARKPKGLAIIAEFGGTVTIKDTKKKREVIVTRTSNDTLESKAYLIPYGSRIKVMDEQVIEAGDELTEGSVNPHDILKIKGVRAVQDYMIQEVQRVYRLQGVEINDKHIEVIVRQMLKKVRVENNGDAEFLPGTMVDILEYNDVNESLAAKGLEQAEGKQVMLGITKASLATNSFLSAASFQETTKVLTEAAIKGKIDPLIGLKENVIIGKLIPAGTGMKHYRNVKLDTDQNQEITFSEDEFDNGNYEGNFSGNDFKQNFYENEDFNSDEEVSFTEDEYFEDEENDLSTENFDDLKFSEEEE.

Residues cysteine 68, cysteine 70, cysteine 83, and cysteine 86 each contribute to the Zn(2+) site. The Mg(2+) site is built by aspartate 457, aspartate 459, and aspartate 461. Zn(2+)-binding residues include cysteine 803, cysteine 885, cysteine 892, and cysteine 895. A compositionally biased stretch (acidic residues) spans 1220–1240 (NSDEEVSFTEDEYFEDEENDL). Positions 1220 to 1255 (NSDEEVSFTEDEYFEDEENDLSTENFDDLKFSEEEE) are disordered. The segment covering 1246 to 1255 (DDLKFSEEEE) has biased composition (basic and acidic residues).

It belongs to the RNA polymerase beta' chain family. In terms of assembly, the RNAP catalytic core consists of 2 alpha, 1 beta, 1 beta' and 1 omega subunit. When a sigma factor is associated with the core the holoenzyme is formed, which can initiate transcription. Requires Mg(2+) as cofactor. It depends on Zn(2+) as a cofactor.

The catalysed reaction is RNA(n) + a ribonucleoside 5'-triphosphate = RNA(n+1) + diphosphate. Its function is as follows. DNA-dependent RNA polymerase catalyzes the transcription of DNA into RNA using the four ribonucleoside triphosphates as substrates. The chain is DNA-directed RNA polymerase subunit beta' from Lachnoclostridium phytofermentans (strain ATCC 700394 / DSM 18823 / ISDg) (Clostridium phytofermentans).